A 1493-amino-acid chain; its full sequence is ABC transporter C family member 7 (1493 aa).

The next 10 membrane-spanning stretches (helical) occupy residues F21 to V41, V70 to F90, L102 to I122, V140 to Y160, L165 to C185, I309 to L329, Y343 to V360, W423 to Y443, L448 to A468, and S535 to L555. Positions I309–Q590 constitute an ABC transmembrane type-1 1 domain. Residues V624–A847 form the ABC transporter 1 domain. G659–S666 is an ATP binding site. A disordered region spans residues A863 to E898. Phosphoserine is present on S888. Helical transmembrane passes span L915–L935, G959–V979, F1038–M1055, A1059–I1081, L1153–I1173, and F1177–W1197. The region spanning V922–N1204 is the ABC transmembrane type-1 2 domain. The region spanning I1241–A1475 is the ABC transporter 2 domain. G1275 to S1282 is a binding site for ATP.

It belongs to the ABC transporter superfamily. ABCC family. Conjugate transporter (TC 3.A.1.208) subfamily. As to expression, ubiquitous.

It is found in the membrane. It carries out the reaction ATP + H2O + xenobioticSide 1 = ADP + phosphate + xenobioticSide 2.. In terms of biological role, pump for glutathione S-conjugates. The chain is ABC transporter C family member 7 (ABCC7) from Arabidopsis thaliana (Mouse-ear cress).